The chain runs to 509 residues: Acetyl-coenzyme A carboxylase carboxyl transferase subunit beta, chloroplastic (509 aa).

A disordered region spans residues 164–216 (HGSVCDGESHNSSEGESSSRRTHTKGVDLTIRESSNENERESSNENERKSSND). Basic and acidic residues-rich tracts occupy residues 170–182 (GESHNSSEGESSS) and 193–216 (TIRESSNENERESSNENERKSSND). Residues 226–509 (LWLQCENCYG…LNQNSNQVEC (284 aa)) form the CoA carboxyltransferase N-terminal domain. Zn(2+)-binding residues include Cys-230, Cys-233, Cys-249, and Cys-252. A C4-type zinc finger spans residues 230 to 252 (CENCYGLNYKKFLKSKMNICEQC). The tract at residues 288 to 307 (FDSEGEQEQEQEQEQEEEET) is disordered.

It belongs to the AccD/PCCB family. Acetyl-CoA carboxylase is a heterohexamer composed of biotin carboxyl carrier protein, biotin carboxylase and 2 subunits each of ACCase subunit alpha and ACCase plastid-coded subunit beta (accD). Requires Zn(2+) as cofactor.

It is found in the plastid. The protein localises to the chloroplast stroma. It catalyses the reaction N(6)-carboxybiotinyl-L-lysyl-[protein] + acetyl-CoA = N(6)-biotinyl-L-lysyl-[protein] + malonyl-CoA. The protein operates within lipid metabolism; malonyl-CoA biosynthesis; malonyl-CoA from acetyl-CoA: step 1/1. Functionally, component of the acetyl coenzyme A carboxylase (ACC) complex. Biotin carboxylase (BC) catalyzes the carboxylation of biotin on its carrier protein (BCCP) and then the CO(2) group is transferred by the transcarboxylase to acetyl-CoA to form malonyl-CoA. In Ipomoea purpurea (Common morning glory), this protein is Acetyl-coenzyme A carboxylase carboxyl transferase subunit beta, chloroplastic.